The chain runs to 500 residues: MTTTSNLPEQADIVMIGAGIMSATLATVLKALEPSLKIVMLETLNDCAMESSNGWNNAGTGHAANCEMNYTPPRPDGTVDISRALEVNTEFDLSRQLWSYLVKTGAIPDPQAFIHPCPHMSMVWGADNVKYLRQRFKEMSAHHCYRGMEYSEDPKQIAEWVPLVMQGRSGNEPIAVTRIVSGADVDYGALTHLLIKSLTEQAGFEVHYLKHVHDLARQRDGSWRIGIRDRGSKAQQTIQAKFVFVGAGGGAIELLQKSGIPEGHGYGGFPVSGIWLRCDVDSMSERHHAKVYGKAPHGSPPMSVPHLDTRIIGGKRSLLFGPYAGFSSRFLKHGSLTDLFRSVRPGNVLPMLDVAKDNWPLTEYLVSQVLQSAGHQFEMLRQYYPEARNHDWTHAVAGQRVQIIKPGTDKVGVLEFGTELVTSADRSFAALLGASPGASTAAFIALEVLQKCFADKLTADAWLPRLKTVIPTYGVDLKTDAEACFSIRKSTASVLNLDYV.

The protein belongs to the MQO family. It depends on FAD as a cofactor.

The catalysed reaction is (S)-malate + a quinone = a quinol + oxaloacetate. It participates in carbohydrate metabolism; tricarboxylic acid cycle; oxaloacetate from (S)-malate (quinone route): step 1/1. The polypeptide is Probable malate:quinone oxidoreductase (Bordetella avium (strain 197N)).